Reading from the N-terminus, the 300-residue chain is Protein p34 (300 aa).

The next 5 membrane-spanning stretches (helical) occupy residues 14-34, 39-59, 87-107, 119-139, and 170-190; these read YLSVTTALIILIIKLYAWVVT, ILASLIDSMLDITSSFINLVA, SIFFFASAFFVGFASVKSLFI, IIMYLCMFLTIILVLYQTYVI, and LSDYFWFVDPLFGVVISLYIF.

The protein belongs to the cation diffusion facilitator (CDF) transporter (TC 2.A.4) family.

Its subcellular location is the cell membrane. This is Protein p34 (p34) from Rickettsia prowazekii (strain Madrid E).